The primary structure comprises 409 residues: Protein PHOSPHATE STARVATION RESPONSE 1 (409 aa).

Over residues 1 to 15 (MEARPVHRSGSRDLT) the composition is skewed to basic and acidic residues. Disordered regions lie at residues 1–42 (MEAR…NSQL), 86–108 (EKQQ…NNDS), and 178–226 (ETNS…TGKA). 2 stretches are compositionally biased toward polar residues: residues 16–26 (RTSSIPSTQKP) and 90–108 (HYTG…NNDS). Over residues 192–224 (QIPQPQIVQQQPSPSVELRPVSTTSSNSNNGTG) the composition is skewed to low complexity. The 61-residue stretch at 222-282 (GTGKARMRWT…HLQKYRTARY (61 aa)) folds into the HTH myb-type domain. The H-T-H motif DNA-binding region spans 253–278 (PKGVLKIMKVEGLTIYHVKSHLQKYR). The stretch at 314–334 (TEALRLQMEVQKQLHEQLEIQ) forms a coiled coil. The short motif at 327 to 332 (LHEQLE) is the LHEQLE element. A compositionally biased stretch (polar residues) spans 358–370 (GLTKGTASTSDSA). Positions 358 to 409 (GLTKGTASTSDSAAKSEQEDKKTADSKEVPEEETRKCEELESPQPKRPKIDN) are disordered. A compositionally biased stretch (basic and acidic residues) spans 371 to 396 (AKSEQEDKKTADSKEVPEEETRKCEE). Ser-399 bears the Phosphoserine mark.

Belongs to the MYB-CC family. As to quaternary structure, homodimers and heterodimers. Interacts with SPX1 in a Pi-dependent manner. Does not interact with PHL2 or PHL3. In terms of processing, sumoylated by SIZ1. Sumoylation controls phosphate deficiency responses.

The protein resides in the nucleus. Functionally, transcription factor involved in phosphate starvation signaling. Binds as a dimer to P1BS, an imperfect palindromic sequence 5'-GNATATNC-3', to promote the expression of inorganic phosphate (Pi) starvation-responsive genes. SPX1 is a competitive inhibitor of this DNA-binding. PHR1 binding to its targets is low Pi-dependent. Regulates the expression of miR399. Regulates the expression of IPS1 (At3g09922), a non-coding RNA that mimics the target of miR399 to block the cleavage of PHO2 under Pi-deficient conditions. Regulates lipid remodeling and triacylglycerol accumulation during phosphorus starvation. Required for the shoot-specific hypoxic response. Regulates FER1 expression upon phosphate starvation, linking iron and phosphate homeostasis. Contributes to the homeostasis of both sulfate and phosphate in plants under phosphate deficiency. Required for adaptation to high light and retaining functional photosynthesis during phosphate starvation. Involved in the coregulation of Zn and Pi homeostasis. The chain is Protein PHOSPHATE STARVATION RESPONSE 1 from Arabidopsis thaliana (Mouse-ear cress).